The primary structure comprises 612 residues: uncharacterized protein (612 aa).

Residues 39–100 (ERDHNLWEIE…KNISVKDLDE (62 aa)) adopt a coiled-coil conformation. A disordered region spans residues 219–241 (PLSSGESLPKKEEEVTKSPSFTL). WD repeat units follow at residues 286–325 (TSTQ…NDNS), 337–376 (GHEG…TSDS), 389–432 (GHED…FKIR), 434–470 (DSKQ…LVSQ), 483–523 (AVKD…LLAE), 526–565 (ISKV…STLE), and 574–612 (EEIT…KYLP).

The protein resides in the cytoplasm. This is an uncharacterized protein from Schizosaccharomyces pombe (strain 972 / ATCC 24843) (Fission yeast).